A 114-amino-acid polypeptide reads, in one-letter code: Turripeptide OL22 (114 aa).

In terms of processing, contains 6 disulfide bonds. As to expression, expressed by the venom duct.

It localises to the secreted. Its function is as follows. Acts as a neurotoxin by inhibiting an ion channel. The polypeptide is Turripeptide OL22 (Iotyrris olangoensis (Sea snail)).